Consider the following 122-residue polypeptide: Large ribosomal subunit protein uL18 (122 aa).

Residues 1 to 25 are disordered; that stretch reads MSTLSRKQQTQKRHRRLRRHLSGTA. Residues 9–21 are compositionally biased toward basic residues; it reads QTQKRHRRLRRHL.

This sequence belongs to the universal ribosomal protein uL18 family. In terms of assembly, part of the 50S ribosomal subunit; part of the 5S rRNA/L5/L18/L25 subcomplex. Contacts the 5S and 23S rRNAs.

Functionally, this is one of the proteins that bind and probably mediate the attachment of the 5S RNA into the large ribosomal subunit, where it forms part of the central protuberance. The chain is Large ribosomal subunit protein uL18 from Synechococcus sp. (strain CC9311).